The chain runs to 94 residues: Small ribosomal subunit protein uS19 (94 aa).

It belongs to the universal ribosomal protein uS19 family.

Protein S19 forms a complex with S13 that binds strongly to the 16S ribosomal RNA. This Halothermothrix orenii (strain H 168 / OCM 544 / DSM 9562) protein is Small ribosomal subunit protein uS19.